The following is a 37-amino-acid chain: FECSVSCEIEKEGNKDCKKKKCKGGWKCKFNMCVKDI.

3 cysteine pairs are disulfide-bonded: C3/C17, C7/C28, and C22/C33.

The protein belongs to the neurotoxin 12 (Hwtx-2) family. 02 (Hwtx-2) subfamily. As to expression, expressed by the venom gland.

The protein localises to the secreted. Postsynaptic neurotoxin. The polypeptide is U4-theraphotoxin-Hhn1v (Cyriopagopus hainanus (Chinese bird spider)).